We begin with the raw amino-acid sequence, 605 residues long: Inactive LRR receptor-like serine/threonine-protein kinase BIR2 (605 aa).

Residues 1–28 form the signal peptide; that stretch reads MKEIGSKPRKLLPLCFIIFLCFCSSVMA. The Extracellular segment spans residues 29-229; that stretch reads ADEDDIRCLR…CGGLSKKNLG (201 aa). N-linked (GlcNAc...) asparagine glycosylation occurs at N58. 4 LRR repeats span residues 101–125, 127–150, 152–173, and 174–197; these read CASL…LCNW, PFLV…LAKC, FVNS…QFSA, and LGRL…FFSS. Residues 230–250 form a helical membrane-spanning segment; it reads IIIAAGVFGAAASMLLAFGIW. Residues 251 to 605 lie on the Cytoplasmic side of the membrane; the sequence is WYYHLKWTRR…IFDTQENEKV (355 aa). S271 carries the phosphoserine; by BAK1 modification. T283 is subject to Phosphothreonine; by BAK1. S286 bears the Phosphoserine; by BAK1 mark. Phosphothreonine; by BAK1 is present on T304. Residues 307–578 enclose the Protein kinase domain; it reads FNSENIIVST…FQAYQSLKAI (272 aa). 313 to 321 is an ATP binding site; it reads IVSTRTGTT. At S330 the chain carries Phosphoserine; by BAK1. Residue K335 participates in ATP binding. Position 389 is a phosphoserine; by BAK1 (S389). The residue at position 402 (T402) is a Phosphothreonine. Phosphoserine; by BAK1 occurs at positions 448 and 462. Phosphothreonine; by BAK1 is present on T466. Y479 is subject to Phosphotyrosine. T482 bears the Phosphothreonine mark. S486 bears the Phosphoserine mark. T533 carries the post-translational modification Phosphothreonine; by BAK1.

This sequence belongs to the protein kinase superfamily. Ser/Thr protein kinase family. Interacts constitutively with BAK1, when phosphorylated, thereby preventing interaction with the ligand-binding LRR-RLK FLS2. Upon infection, pathogen-associated molecular patterns (PAMP) perception leads to BIR2 release from the BAK1 complex and enables the recruitment of BAK1 into the FLS2 complex. In terms of processing, phosphorylated by BAK1, this interacts promotes interaction with BAK1.

The protein resides in the cell membrane. Its function is as follows. Pseudokinases lacking protein kinase activity and unable to bind ATP-analogs. Negative regulator of pathogen-associated molecular patterns- (PAMP-) triggered immunity by limiting BAK1-receptor complex formation in the absence of ligands. In Arabidopsis thaliana (Mouse-ear cress), this protein is Inactive LRR receptor-like serine/threonine-protein kinase BIR2.